Here is a 321-residue protein sequence, read N- to C-terminus: Thioredoxin reductase (321 aa).

36 to 43 (TGMEKGGQ) contacts FAD. A disulfide bridge connects residues Cys136 and Cys139. Residue 287 to 296 (DVMDHIYRQA) coordinates FAD.

The protein belongs to the class-II pyridine nucleotide-disulfide oxidoreductase family. As to quaternary structure, homodimer. It depends on FAD as a cofactor.

The protein localises to the cytoplasm. The enzyme catalyses [thioredoxin]-dithiol + NADP(+) = [thioredoxin]-disulfide + NADPH + H(+). This is Thioredoxin reductase (trxB) from Escherichia coli O157:H7.